A 222-amino-acid chain; its full sequence is Leucyl/phenylalanyl-tRNA--protein transferase (222 aa).

Belongs to the L/F-transferase family.

The protein resides in the cytoplasm. It carries out the reaction N-terminal L-lysyl-[protein] + L-leucyl-tRNA(Leu) = N-terminal L-leucyl-L-lysyl-[protein] + tRNA(Leu) + H(+). The enzyme catalyses N-terminal L-arginyl-[protein] + L-leucyl-tRNA(Leu) = N-terminal L-leucyl-L-arginyl-[protein] + tRNA(Leu) + H(+). It catalyses the reaction L-phenylalanyl-tRNA(Phe) + an N-terminal L-alpha-aminoacyl-[protein] = an N-terminal L-phenylalanyl-L-alpha-aminoacyl-[protein] + tRNA(Phe). Its function is as follows. Functions in the N-end rule pathway of protein degradation where it conjugates Leu, Phe and, less efficiently, Met from aminoacyl-tRNAs to the N-termini of proteins containing an N-terminal arginine or lysine. The protein is Leucyl/phenylalanyl-tRNA--protein transferase of Legionella pneumophila (strain Paris).